Reading from the N-terminus, the 273-residue chain is 3-methyl-2-oxobutanoate hydroxymethyltransferase (273 aa).

Residues Asp-53 and Asp-92 each contribute to the Mg(2+) site. 3-methyl-2-oxobutanoate contacts are provided by residues 53–54 (DS), Asp-92, and Lys-120. Glu-122 contacts Mg(2+). The Proton acceptor role is filled by Glu-189.

The protein belongs to the PanB family. In terms of assembly, homodecamer; pentamer of dimers. It depends on Mg(2+) as a cofactor.

The protein localises to the cytoplasm. It carries out the reaction 3-methyl-2-oxobutanoate + (6R)-5,10-methylene-5,6,7,8-tetrahydrofolate + H2O = 2-dehydropantoate + (6S)-5,6,7,8-tetrahydrofolate. It participates in cofactor biosynthesis; (R)-pantothenate biosynthesis; (R)-pantoate from 3-methyl-2-oxobutanoate: step 1/2. Catalyzes the reversible reaction in which hydroxymethyl group from 5,10-methylenetetrahydrofolate is transferred onto alpha-ketoisovalerate to form ketopantoate. The sequence is that of 3-methyl-2-oxobutanoate hydroxymethyltransferase from Cupriavidus taiwanensis (strain DSM 17343 / BCRC 17206 / CCUG 44338 / CIP 107171 / LMG 19424 / R1) (Ralstonia taiwanensis (strain LMG 19424)).